A 354-amino-acid polypeptide reads, in one-letter code: MTELKNDRYLRALLRQPVDVTPVWMMRQAGRYLPEYKATRAQAGDFMSLCKNAELACEVTLQPLRRYPLDAAILFSDILTIPDAMGLGLYFEAGEGPRFTSPVACKADVDKLPIPDPEDELGYVMNAVRTIRRELKGDVPLIGFSGSPWTLATYMVEGGSSKAFTVIKKMMYADPQALHALLDKLAKSVTLYLNAQIKAGAQSVMIFDTWGGVLTGRDYQQFSLYYMHKIVDGLLRENDGRRVPVTLFTKGGGQWLEAMAETGCDALGLDWTTDIADARRRVGHKVALQGNMDPSMLYAPPARIEEEVATILAGFGQGEGHVFNLGHGIHQDVPPEHAGAFVDAVHRLSEQYHR.

Residues Arg27–Arg31, Asp77, Tyr154, Thr209, and His327 each bind substrate.

This sequence belongs to the uroporphyrinogen decarboxylase family. As to quaternary structure, homodimer.

It localises to the cytoplasm. The enzyme catalyses uroporphyrinogen III + 4 H(+) = coproporphyrinogen III + 4 CO2. The protein operates within porphyrin-containing compound metabolism; protoporphyrin-IX biosynthesis; coproporphyrinogen-III from 5-aminolevulinate: step 4/4. Catalyzes the decarboxylation of four acetate groups of uroporphyrinogen-III to yield coproporphyrinogen-III. This chain is Uroporphyrinogen decarboxylase, found in Citrobacter koseri (strain ATCC BAA-895 / CDC 4225-83 / SGSC4696).